We begin with the raw amino-acid sequence, 840 residues long: Phosphatidylglycerol lysyltransferase (840 aa).

The Cytoplasmic segment spans residues 1–8 (MTEELKNR). Residues 9–29 (LLSILKFVFAAVLFIAVVATL) form a helical membrane-spanning segment. Topologically, residues 30 to 52 (YHELAHINFKQTLEAFSKINRWY) are extracellular. A helical membrane pass occupies residues 53-73 (LVGLFICGGSAMILLSLYDLI). Residues 74-89 (LVKGLKLDIPLIRVFK) are Cytoplasmic-facing. A helical membrane pass occupies residues 90-110 (ISYIINALNAIVGFGGFIGAG). The Extracellular segment spans residues 111-129 (FRAFIYKNYTTDRKKLVHA). The helical transmembrane segment at 130–150 (ISIILISMLMGLSLLSILVVL) threads the bilayer. At 151 to 167 (HIFDASHIINKVSWVRW) the chain is on the cytoplasmic side. A helical transmembrane segment spans residues 168 to 188 (ILYVVALFLPLFIAYTMINPI). Over 189-193 (DRNNK) the chain is Extracellular. A helical membrane pass occupies residues 194–216 (YLGVYCTLVSSFEWLAAATVLYL). Residues 217–229 (STVIVDINIAFTT) lie on the Cytoplasmic side of the membrane. Residues 230–250 (VIGIFIIAALSGLVSFIPGGF) form a helical membrane-spanning segment. The Extracellular segment spans residues 251 to 271 (GAFDLVVLLGLKSLGVPEEKV). The chain crosses the membrane as a helical span at residues 272–292 (LLALLLYRFAYYFVPVIIALI). Residues 293-335 (LSTFEFGSSARKYFEESKYFVPARDVTSFLFSYQKDIIAKIPS) lie on the Cytoplasmic side of the membrane. Residues 336-356 (FALATLVLITSFVFFINNITI) form a helical membrane-spanning segment. The Extracellular segment spans residues 357–366 (VYDGLYDDHH). The helical transmembrane segment at 367–387 (FAYYIMLSVHTSACLLLLINV) threads the bilayer. The Cytoplasmic segment spans residues 388–394 (RGVFKQS). 2 helical membrane-spanning segments follow: residues 395–415 (RRAI…TIYT) and 416–436 (YASL…ILAY). The Cytoplasmic portion of the chain corresponds to 437 to 450 (RRSKVMKRPFRLKR). Residues 451–471 (LIFTIILSMLVLYVNHFIISE) form a helical membrane-spanning segment. The Extracellular portion of the chain corresponds to 472–490 (TLYALDIYHIEMDTSLLKY). The helical transmembrane segment at 491–511 (YFWLTILVVVILVGIVAWLLG) threads the bilayer. Residues 512 to 840 (SRYTRPHQLE…LKVMRVIRHK (329 aa)) lie on the Cytoplasmic side of the membrane.

It belongs to the LPG synthase family.

Its subcellular location is the cell membrane. It catalyses the reaction L-lysyl-tRNA(Lys) + a 1,2-diacyl-sn-glycero-3-phospho-(1'-sn-glycerol) = a 1,2-diacyl-sn-glycero-3-phospho-1'-(3'-O-L-lysyl)-sn-glycerol + tRNA(Lys). In terms of biological role, catalyzes the transfer of a lysyl group from L-lysyl-tRNA(Lys) to membrane-bound phosphatidylglycerol (PG), which produces lysylphosphatidylglycerol (LPG), a major component of the bacterial membrane with a positive net charge. LPG synthesis contributes to bacterial virulence as it is involved in the resistance mechanism against cationic antimicrobial peptides (CAMP) produces by the host's immune system (defensins, cathelicidins) and by the competing microorganisms (bacteriocins). In fact, the modification of anionic phosphatidylglycerol with positively charged L-lysine results in repulsion of the peptides. This chain is Phosphatidylglycerol lysyltransferase (mprF), found in Staphylococcus haemolyticus (strain JCSC1435).